A 298-amino-acid polypeptide reads, in one-letter code: CD-NTase-associated protein 6 (298 aa).

ATP is bound by residues 80–85 (GTGKTA) and 204–205 (RR).

The protein belongs to the AAA ATPase family. In terms of assembly, homohexamer, forms a 1:1:6 CdnC:Cap7:Cap6 complex.

Functionally, regulates complex assembly in a CBASS antivirus system. CBASS (cyclic oligonucleotide-based antiphage signaling system) provides immunity against bacteriophage. The CD-NTase protein synthesizes cyclic nucleotides in response to infection; these serve as specific second messenger signals. The signals activate a diverse range of effectors, leading to bacterial cell death and thus abortive phage infection. A type III CBASS system. Expression of this CBASS system (Cap18-Cap6-Cap7-CdnC-CapW-Cap17) in a susceptible E.coli (strain MG1655) confers resistance to bacteriophage P1. Binds and disassembles an active CdnC:Cap7 complex, inhibiting the complex's ability to synthesize cyclic nucleotide second messengers. An AAA+-ATPase remodeler, in the absence of foreign threat Cap6 probably maintains the Cap7 protein in its open, inactive state. Once activated (presumably by a bacteriophage protein) Cap7 binds to and activates its cognate CD-NTase (CdnC in this bacteria) to synthesize a cyclic nucleotide second messenger which leads to abortive phage infection. The sequence is that of CD-NTase-associated protein 6 from Escherichia coli (strain KTE188).